A 57-amino-acid polypeptide reads, in one-letter code: Stress response protein (57 aa).

A Nuclear localization signal motif is present at residues 6–10 (RKERR).

In terms of tissue distribution, mesophyll protoplasts.

It localises to the nucleus. Its function is as follows. Stress response. May play a role in the reentering of protoplasts into the cell cycle. The protein is Stress response protein of Nicotiana sylvestris (Wood tobacco).